Reading from the N-terminus, the 396-residue chain is MAKEKFARTKPHVNVGTIGHVDHGKTTLTAAITTVLSAKFGGAAKKYDEIDAAPEEKARGITINTAHVEYETANRHYAHVDCPGHADYVKNMITGAAQMDGAILVCSAADGPMPQTREHILLARQVGVPYVLVFMNKCDMVDDAELLELVEMELRELLSKYDFPGDDTPIIHGSALKALEGDQSEIGEPSIFRLADALDSYIPDPERAIDQPFLMPVEDVFSISGRGTVVTGRVERGIVKVGEEIEIVGIRPTVKTICTGVEMFRKLLDQGQAGDNIGALLRGTKREDVERGQVLCKPGSVKPHTHFTSEVYILSKDEGGRHTPFFNGYRPQFYFRTTDVTGSIELPEGTEMVMPGDNIAMTIKLIAPIAMEEGLRFAIREGGRTVGAGVVAKIIE.

The 197-residue stretch at lysine 10–glutamate 206 folds into the tr-type G domain. The tract at residues glycine 19–threonine 26 is G1. Glycine 19–threonine 26 serves as a coordination point for GTP. Threonine 26 is a Mg(2+) binding site. Residues glycine 60–asparagine 64 form a G2 region. Residues aspartate 81–glycine 84 form a G3 region. GTP-binding positions include aspartate 81–histidine 85 and asparagine 136–aspartate 139. Residues asparagine 136–aspartate 139 are G4. The G5 stretch occupies residues serine 174–leucine 176.

Belongs to the TRAFAC class translation factor GTPase superfamily. Classic translation factor GTPase family. EF-Tu/EF-1A subfamily. In terms of assembly, monomer.

Its subcellular location is the cytoplasm. The catalysed reaction is GTP + H2O = GDP + phosphate + H(+). Functionally, GTP hydrolase that promotes the GTP-dependent binding of aminoacyl-tRNA to the A-site of ribosomes during protein biosynthesis. The sequence is that of Elongation factor Tu from Dechloromonas aromatica (strain RCB).